The primary structure comprises 320 residues: o-succinylbenzoate synthase (320 aa).

Catalysis depends on Lys-133, which acts as the Proton donor. Mg(2+) contacts are provided by Asp-161, Glu-190, and Asp-213. Lys-235 functions as the Proton acceptor in the catalytic mechanism.

Belongs to the mandelate racemase/muconate lactonizing enzyme family. MenC type 1 subfamily. A divalent metal cation is required as a cofactor.

The enzyme catalyses (1R,6R)-6-hydroxy-2-succinyl-cyclohexa-2,4-diene-1-carboxylate = 2-succinylbenzoate + H2O. It functions in the pathway quinol/quinone metabolism; 1,4-dihydroxy-2-naphthoate biosynthesis; 1,4-dihydroxy-2-naphthoate from chorismate: step 4/7. Its pathway is quinol/quinone metabolism; menaquinone biosynthesis. Its function is as follows. Converts 2-succinyl-6-hydroxy-2,4-cyclohexadiene-1-carboxylate (SHCHC) to 2-succinylbenzoate (OSB). This Escherichia coli O9:H4 (strain HS) protein is o-succinylbenzoate synthase.